A 193-amino-acid polypeptide reads, in one-letter code: Peptidyl-tRNA hydrolase (193 aa).

Residue Tyr17 participates in tRNA binding. The Proton acceptor role is filled by His22. Positions 68, 70, and 116 each coordinate tRNA.

Belongs to the PTH family. In terms of assembly, monomer.

It is found in the cytoplasm. The enzyme catalyses an N-acyl-L-alpha-aminoacyl-tRNA + H2O = an N-acyl-L-amino acid + a tRNA + H(+). Hydrolyzes ribosome-free peptidyl-tRNAs (with 1 or more amino acids incorporated), which drop off the ribosome during protein synthesis, or as a result of ribosome stalling. In terms of biological role, catalyzes the release of premature peptidyl moieties from peptidyl-tRNA molecules trapped in stalled 50S ribosomal subunits, and thus maintains levels of free tRNAs and 50S ribosomes. This chain is Peptidyl-tRNA hydrolase, found in Acinetobacter baumannii (strain AB307-0294).